The following is a 456-amino-acid chain: Bifunctional protein GlmU (456 aa).

The pyrophosphorylase stretch occupies residues 1-229 (MLNNAMSVVI…LSEVEGVNNR (229 aa)). Residues 11–14 (LAAG), lysine 25, glutamine 76, 81–82 (GT), 103–105 (YGD), glycine 140, glutamate 154, asparagine 169, and asparagine 227 each bind UDP-N-acetyl-alpha-D-glucosamine. Aspartate 105 lines the Mg(2+) pocket. Residue asparagine 227 participates in Mg(2+) binding. Residues 230 to 250 (LQLSRLERVYQSEQAEKLLLA) form a linker region. Residues 251–456 (GVMLRDPARF…EGWRRPVKKK (206 aa)) form an N-acetyltransferase region. Residues arginine 333 and lysine 351 each coordinate UDP-N-acetyl-alpha-D-glucosamine. The Proton acceptor role is filled by histidine 363. UDP-N-acetyl-alpha-D-glucosamine contacts are provided by tyrosine 366 and asparagine 377. Residues alanine 380, 386–387 (NY), serine 405, alanine 423, and arginine 440 each bind acetyl-CoA.

In the N-terminal section; belongs to the N-acetylglucosamine-1-phosphate uridyltransferase family. This sequence in the C-terminal section; belongs to the transferase hexapeptide repeat family. Homotrimer. Mg(2+) is required as a cofactor.

The protein resides in the cytoplasm. The enzyme catalyses alpha-D-glucosamine 1-phosphate + acetyl-CoA = N-acetyl-alpha-D-glucosamine 1-phosphate + CoA + H(+). It catalyses the reaction N-acetyl-alpha-D-glucosamine 1-phosphate + UTP + H(+) = UDP-N-acetyl-alpha-D-glucosamine + diphosphate. Its pathway is nucleotide-sugar biosynthesis; UDP-N-acetyl-alpha-D-glucosamine biosynthesis; N-acetyl-alpha-D-glucosamine 1-phosphate from alpha-D-glucosamine 6-phosphate (route II): step 2/2. It functions in the pathway nucleotide-sugar biosynthesis; UDP-N-acetyl-alpha-D-glucosamine biosynthesis; UDP-N-acetyl-alpha-D-glucosamine from N-acetyl-alpha-D-glucosamine 1-phosphate: step 1/1. The protein operates within bacterial outer membrane biogenesis; LPS lipid A biosynthesis. Its function is as follows. Catalyzes the last two sequential reactions in the de novo biosynthetic pathway for UDP-N-acetylglucosamine (UDP-GlcNAc). The C-terminal domain catalyzes the transfer of acetyl group from acetyl coenzyme A to glucosamine-1-phosphate (GlcN-1-P) to produce N-acetylglucosamine-1-phosphate (GlcNAc-1-P), which is converted into UDP-GlcNAc by the transfer of uridine 5-monophosphate (from uridine 5-triphosphate), a reaction catalyzed by the N-terminal domain. This chain is Bifunctional protein GlmU, found in Shigella boydii serotype 4 (strain Sb227).